We begin with the raw amino-acid sequence, 91 residues long: Putative regulatory protein Tlet_1629 (91 aa).

Belongs to the RemA family.

The chain is Putative regulatory protein Tlet_1629 from Pseudothermotoga lettingae (strain ATCC BAA-301 / DSM 14385 / NBRC 107922 / TMO) (Thermotoga lettingae).